A 405-amino-acid chain; its full sequence is Putative arsenical pump-driving ATPase (405 aa).

8–15 (GKGGVGKT) serves as a coordination point for ATP.

This sequence belongs to the arsA ATPase family.

The enzyme catalyses arsenite(in) + ATP + H2O = arsenite(out) + ADP + phosphate + H(+). In terms of biological role, anion-transporting ATPase. Catalyzes the extrusion of arsenite. The sequence is that of Putative arsenical pump-driving ATPase from Prosthecochloris vibrioformis (Chlorobium vibrioforme).